Reading from the N-terminus, the 229-residue chain is Uracil-DNA glycosylase (229 aa).

Aspartate 64 serves as the catalytic Proton acceptor.

This sequence belongs to the uracil-DNA glycosylase (UDG) superfamily. UNG family.

Its subcellular location is the cytoplasm. It catalyses the reaction Hydrolyzes single-stranded DNA or mismatched double-stranded DNA and polynucleotides, releasing free uracil.. Functionally, excises uracil residues from the DNA which can arise as a result of misincorporation of dUMP residues by DNA polymerase or due to deamination of cytosine. The chain is Uracil-DNA glycosylase from Escherichia coli O45:K1 (strain S88 / ExPEC).